The sequence spans 233 residues: Uridylate kinase (233 aa).

ATP is bound by residues 8 to 11, glycine 51, and arginine 55; that span reads KLSG. Residues aspartate 68 and 129-136 each bind UMP; that span reads TSNPFFTT. Residues threonine 156, tyrosine 162, and aspartate 165 each coordinate ATP.

The protein belongs to the UMP kinase family. Homohexamer.

The protein resides in the cytoplasm. It catalyses the reaction UMP + ATP = UDP + ADP. Its pathway is pyrimidine metabolism; CTP biosynthesis via de novo pathway; UDP from UMP (UMPK route): step 1/1. Inhibited by UTP. Its function is as follows. Catalyzes the reversible phosphorylation of UMP to UDP. The sequence is that of Uridylate kinase from Pseudothermotoga lettingae (strain ATCC BAA-301 / DSM 14385 / NBRC 107922 / TMO) (Thermotoga lettingae).